Consider the following 193-residue polypeptide: Orotate phosphoribosyltransferase (193 aa).

117–125 (EDVVTTGLS) contributes to the 5-phospho-alpha-D-ribose 1-diphosphate binding site. Orotate-binding residues include Thr121 and Arg149.

Belongs to the purine/pyrimidine phosphoribosyltransferase family. PyrE subfamily. In terms of assembly, homodimer. The cofactor is Mg(2+).

The catalysed reaction is orotidine 5'-phosphate + diphosphate = orotate + 5-phospho-alpha-D-ribose 1-diphosphate. Its pathway is pyrimidine metabolism; UMP biosynthesis via de novo pathway; UMP from orotate: step 1/2. Catalyzes the transfer of a ribosyl phosphate group from 5-phosphoribose 1-diphosphate to orotate, leading to the formation of orotidine monophosphate (OMP). The chain is Orotate phosphoribosyltransferase from Erythrobacter litoralis (strain HTCC2594).